The following is a 160-amino-acid chain: MSILKKPDLTDPKLRAKLAKGMGHNYYGEPAWPNDLLYVFPVVIIGTFACSIGLAILEPSSIGEKSNPFATPLEILPEWYFFPTFNLLRVIPNKLLGVLSMAAVPAGLLTVPFIENVNKFQNPFRRPIATTVFLIGTVVSIWLGIGATMPINNAITLGLF.

The next 3 helical transmembrane spans lie at 36–56 (LLYV…GLAI), 95–115 (LLGV…PFIE), and 131–151 (TVFL…TMPI).

This sequence belongs to the cytochrome b family. PetD subfamily. In terms of assembly, the 4 large subunits of the cytochrome b6-f complex are cytochrome b6, subunit IV (17 kDa polypeptide, petD), cytochrome f and the Rieske protein, while the 4 small subunits are petG, petL, petM and petN. The complex functions as a dimer.

The protein localises to the plastid. It is found in the chloroplast thylakoid membrane. In terms of biological role, component of the cytochrome b6-f complex, which mediates electron transfer between photosystem II (PSII) and photosystem I (PSI), cyclic electron flow around PSI, and state transitions. This chain is Cytochrome b6-f complex subunit 4, found in Pyropia yezoensis (Susabi-nori).